The chain runs to 84 residues: Large ribosomal subunit protein bL27 (84 aa).

Residues 1 to 22 form a disordered region; that stretch reads MAHKKAGGSTRNGRDSESKRLG.

Belongs to the bacterial ribosomal protein bL27 family.

The sequence is that of Large ribosomal subunit protein bL27 from Shewanella oneidensis (strain ATCC 700550 / JCM 31522 / CIP 106686 / LMG 19005 / NCIMB 14063 / MR-1).